Consider the following 186-residue polypeptide: Adenylate kinase (186 aa).

11–16 contacts ATP; that stretch reads GAGKGT. Residues 31–60 are NMP; that stretch reads STGDILRAAVKNGTAMGIEAKKYMDAGDLV. AMP is bound by residues threonine 32, arginine 37, 58–60, 86–89, and glutamine 93; these read DLV and GFPR. Residues 127–137 are LID; sequence GRAIKEGRSDD. ATP is bound at residue arginine 128. AMP contacts are provided by arginine 134 and arginine 145. An ATP-binding site is contributed by glycine 173.

It belongs to the adenylate kinase family. In terms of assembly, monomer.

The protein localises to the cytoplasm. It carries out the reaction AMP + ATP = 2 ADP. Its pathway is purine metabolism; AMP biosynthesis via salvage pathway; AMP from ADP: step 1/1. Functionally, catalyzes the reversible transfer of the terminal phosphate group between ATP and AMP. Plays an important role in cellular energy homeostasis and in adenine nucleotide metabolism. This chain is Adenylate kinase, found in Leptospira biflexa serovar Patoc (strain Patoc 1 / Ames).